A 312-amino-acid chain; its full sequence is Glyoxylate/hydroxypyruvate reductase A (312 aa).

R227 is a catalytic residue. H275 acts as the Proton donor in catalysis.

This sequence belongs to the D-isomer specific 2-hydroxyacid dehydrogenase family. GhrA subfamily.

Its subcellular location is the cytoplasm. The enzyme catalyses glycolate + NADP(+) = glyoxylate + NADPH + H(+). It carries out the reaction (R)-glycerate + NAD(+) = 3-hydroxypyruvate + NADH + H(+). It catalyses the reaction (R)-glycerate + NADP(+) = 3-hydroxypyruvate + NADPH + H(+). Catalyzes the NADPH-dependent reduction of glyoxylate and hydroxypyruvate into glycolate and glycerate, respectively. This Escherichia coli O17:K52:H18 (strain UMN026 / ExPEC) protein is Glyoxylate/hydroxypyruvate reductase A.